The following is a 36-amino-acid chain: EISCEPGTTFQDKCNTCRCGKDGKSAAGCTLKACPQ.

The Pacifastin domain occupies 1-36; the sequence is EISCEPGTTFQDKCNTCRCGKDGKSAAGCTLKACPQ. Cystine bridges form between cysteine 4–cysteine 19, cysteine 14–cysteine 34, and cysteine 17–cysteine 29.

It belongs to the protease inhibitor I19 family. In terms of tissue distribution, expressed in hemolymph.

It localises to the secreted. Its function is as follows. Probable serine protease inhibitor. The sequence is that of Serine protease inhibitor 2 from Melanoplus sanguinipes (Migratory grasshopper).